Consider the following 413-residue polypeptide: Probable elongation factor 1-gamma 2 (413 aa).

One can recognise a GST N-terminal domain in the interval 1 to 82; it reads MALVMHTYKG…YVSRKNGDNS (82 aa). The GST C-terminal domain maps to 87-215; it reads SLIEYAHIEQ…AKQTEAVPPV (129 aa). Residues 207–260 are disordered; sequence KQTEAVPPVPTKKAPQPAKPKEEPKKAAPVAEAPKPAEEEEAPKPKAKNPLDLL. An EF-1-gamma C-terminal domain is found at 253-413; that stretch reads AKNPLDLLPP…EALLDAKCFK (161 aa).

As to quaternary structure, EF-1 is composed of four subunits: alpha, beta, delta, and gamma.

Probably plays a role in anchoring the complex to other cellular components. The protein is Probable elongation factor 1-gamma 2 of Arabidopsis thaliana (Mouse-ear cress).